The primary structure comprises 314 residues: Lysophospholipase D GDPD1 (314 aa).

Residues 1–3 (MSS) are Extracellular-facing. Residues 4–24 (TAAFCLLSTLGGYLVTSFLLL) traverse the membrane as a helical segment. Residues 25–195 (KYPALLHQRK…VDKCYKENSD (171 aa)) lie on the Cytoplasmic side of the membrane. One can recognise a GP-PDE domain in the interval 40–309 (SRHISHRGGA…DYPTKLKDFL (270 aa)). A divalent metal cation is bound by residues E72, D74, and H87. Residues 196 to 216 (IPILFSLQRVLLILGLFFTGL) traverse the membrane as a helical segment. Topologically, residues 217-314 (LPFVPIREQF…LKDFLNNFSA (98 aa)) are extracellular.

The protein belongs to the glycerophosphoryl diester phosphodiesterase family. As to expression, widely expressed.

The protein localises to the cytoplasm. It is found in the membrane. The protein resides in the perinuclear region. Its subcellular location is the endoplasmic reticulum. It carries out the reaction 1-hexadecanoyl-sn-glycero-3-phosphocholine + H2O = 1-hexadecanoyl-sn-glycero-3-phosphate + choline + H(+). The catalysed reaction is 1-hexadecanoyl-sn-glycero-3-phosphoethanolamine + H2O = 1-hexadecanoyl-sn-glycero-3-phosphate + ethanolamine + H(+). The enzyme catalyses N-hexadecanoyl-sn-glycero-3-phosphoethanolamine + H2O = N-hexadecanoylethanolamine + sn-glycerol 3-phosphate + H(+). It catalyses the reaction N-(5Z,8Z,11Z,14Z-eicosatetraenoyl)-1-(9Z-octadecenoyl)-sn-glycero-3-phosphoethanolamine + H2O = N-(5Z,8Z,11Z,14Z-eicosatetraenoyl)-ethanolamine + 1-(9Z-octadecenoyl)-sn-glycero-3-phosphate + H(+). It carries out the reaction N,1-di-(9Z-octadecenoyl)-sn-glycero-3-phosphoethanolamine + H2O = N-(9Z-octadecenoyl) ethanolamine + 1-(9Z-octadecenoyl)-sn-glycero-3-phosphate + H(+). The catalysed reaction is N-hexadecanoyl-1-(9Z-octadecenoyl)-sn-glycero-3-phosphoethanolamine + H2O = N-hexadecanoylethanolamine + 1-(9Z-octadecenoyl)-sn-glycero-3-phosphate + H(+). The enzyme catalyses a 1-O-alkyl-sn-glycero-3-phosphocholine + H2O = a 1-O-alkyl-sn-glycero-3-phosphate + choline + H(+). It catalyses the reaction 1-O-hexadecyl-sn-glycero-3-phosphocholine + H2O = 1-O-hexadecyl-sn-glycero-3-phosphate + choline + H(+). It carries out the reaction 1-(9Z-octadecenoyl)-sn-glycero-3-phosphocholine + H2O = 1-(9Z-octadecenoyl)-sn-glycero-3-phosphate + choline + H(+). The catalysed reaction is N,1-dihexadecanoyl-sn-glycero-3-phosphoethanolamine + H2O = N-hexadecanoylethanolamine + 1-hexadecanoyl-sn-glycero-3-phosphate + H(+). The enzyme catalyses 1-O-(1Z-octadecenyl)-sn-glycero-3-phospho-(N-5Z,8Z,11Z,14Z-eicosatetraenoyl)-ethanolamine + H2O = 1-O-(1Z-octadecenyl)-sn-glycero-3-phosphate + N-(5Z,8Z,11Z,14Z-eicosatetraenoyl)-ethanolamine + H(+). It catalyses the reaction 1-O-(1Z-octadecenyl)-sn-glycero-3-phospho-(N-9Z-octadecenoyl)-ethanolamine + H2O = 1-O-(1Z-octadecenyl)-sn-glycero-3-phosphate + N-(9Z-octadecenoyl) ethanolamine + H(+). It carries out the reaction 1-O-(1Z-octadecenyl)-sn-glycero-3-phospho-N-hexadecanoyl-ethanolamine + H2O = 1-O-(1Z-octadecenyl)-sn-glycero-3-phosphate + N-hexadecanoylethanolamine + H(+). With respect to regulation, lysophospholipase D activity is increased by magnesium and manganese and inhibited by calcium in a concentration dependent manner. Loss of lysophospholipase D activity by addition of EDTA. In terms of biological role, hydrolyzes lysoglycerophospholipids to produce lysophosphatidic acid (LPA) and the corresponding amines. Shows a preference for 1-O-alkyl-sn-glycero-3-phosphocholine (lyso-PAF), lysophosphatidylethanolamine (lyso-PE) and lysophosphatidylcholine (lyso-PC). May be involved in bioactive N-acylethanolamine biosynthesis from both N-acyl-lysoplasmenylethanolamin (N-acyl-lysoPlsEt) and N-acyl-lysophosphatidylethanolamin (N-acyl-lysoPE). In addition, hydrolyzes glycerophospho-N-acylethanolamine to N-acylethanolamine. Does not display glycerophosphodiester phosphodiesterase activity, since it cannot hydrolyze either glycerophosphoinositol or glycerophosphocholine. The chain is Lysophospholipase D GDPD1 from Mus musculus (Mouse).